The chain runs to 136 residues: Galectin-7 (136 aa).

The Galectin domain maps to 6-136 (HKTPLPQGVR…DVQLHSVKIF (131 aa)). 70-76 (WGREERG) is an a beta-D-galactoside binding site.

As to quaternary structure, monomer.

It localises to the cytoplasm. The protein resides in the nucleus. Its subcellular location is the secreted. Functionally, could be involved in cell-cell and/or cell-matrix interactions necessary for normal growth control. Pro-apoptotic protein that functions intracellularly upstream of JNK activation and cytochrome c release. The chain is Galectin-7 (Lgals7) from Rattus norvegicus (Rat).